The primary structure comprises 489 residues: 3-octaprenyl-4-hydroxybenzoate carboxy-lyase (489 aa).

A Mn(2+)-binding site is contributed by Asn-172. Residues Ile-175 to Arg-177, Arg-189 to Leu-191, and Arg-194 to Gly-195 contribute to the prenylated FMN site. Residue Glu-238 participates in Mn(2+) binding. The active-site Proton donor is the Asp-287.

This sequence belongs to the UbiD family. Homohexamer. Prenylated FMN is required as a cofactor. It depends on Mn(2+) as a cofactor.

Its subcellular location is the cell membrane. It catalyses the reaction a 4-hydroxy-3-(all-trans-polyprenyl)benzoate + H(+) = a 2-(all-trans-polyprenyl)phenol + CO2. Its pathway is cofactor biosynthesis; ubiquinone biosynthesis. In terms of biological role, catalyzes the decarboxylation of 3-octaprenyl-4-hydroxy benzoate to 2-octaprenylphenol, an intermediate step in ubiquinone biosynthesis. The polypeptide is 3-octaprenyl-4-hydroxybenzoate carboxy-lyase (Aeromonas hydrophila subsp. hydrophila (strain ATCC 7966 / DSM 30187 / BCRC 13018 / CCUG 14551 / JCM 1027 / KCTC 2358 / NCIMB 9240 / NCTC 8049)).